Consider the following 233-residue polypeptide: Biosynthetic peptidoglycan transglycosylase (233 aa).

The chain crosses the membrane as a helical span at residues 8-28; the sequence is LIALPVGIFIFFNAYVYGNII.

Belongs to the glycosyltransferase 51 family.

The protein resides in the cell inner membrane. The enzyme catalyses [GlcNAc-(1-&gt;4)-Mur2Ac(oyl-L-Ala-gamma-D-Glu-L-Lys-D-Ala-D-Ala)](n)-di-trans,octa-cis-undecaprenyl diphosphate + beta-D-GlcNAc-(1-&gt;4)-Mur2Ac(oyl-L-Ala-gamma-D-Glu-L-Lys-D-Ala-D-Ala)-di-trans,octa-cis-undecaprenyl diphosphate = [GlcNAc-(1-&gt;4)-Mur2Ac(oyl-L-Ala-gamma-D-Glu-L-Lys-D-Ala-D-Ala)](n+1)-di-trans,octa-cis-undecaprenyl diphosphate + di-trans,octa-cis-undecaprenyl diphosphate + H(+). The protein operates within cell wall biogenesis; peptidoglycan biosynthesis. Its function is as follows. Peptidoglycan polymerase that catalyzes glycan chain elongation from lipid-linked precursors. The polypeptide is Biosynthetic peptidoglycan transglycosylase (Neisseria meningitidis serogroup A / serotype 4A (strain DSM 15465 / Z2491)).